A 116-amino-acid chain; its full sequence is Iron-sulfur cluster assembly protein CyaY (116 aa).

It belongs to the frataxin family.

Involved in iron-sulfur (Fe-S) cluster assembly. May act as a regulator of Fe-S biogenesis. The sequence is that of Iron-sulfur cluster assembly protein CyaY from Buchnera aphidicola subsp. Acyrthosiphon pisum (strain APS) (Acyrthosiphon pisum symbiotic bacterium).